The chain runs to 832 residues: Elongation factor 2 (832 aa).

The tr-type G domain maps to 17-336 (HNIRNMSVIA…MIVTHLPSPA (320 aa)). A GTP-binding site is contributed by 26–33 (AHVDHGKS). Residues T57 and T59 each carry the phosphothreonine modification. GTP is bound by residues 152-155 (NKVD) and 207-209 (SGL). The interval 580–608 (AEPLPDGLTDDIEEGKVSPRDDPKERSNL) is disordered. Residues 593–608 (EGKVSPRDDPKERSNL) show a composition bias toward basic and acidic residues. Position 689 is a diphthamide (H689).

The protein belongs to the TRAFAC class translation factor GTPase superfamily. Classic translation factor GTPase family. EF-G/EF-2 subfamily.

It is found in the cytoplasm. It catalyses the reaction GTP + H2O = GDP + phosphate + H(+). Functionally, catalyzes the GTP-dependent ribosomal translocation step during translation elongation. During this step, the ribosome changes from the pre-translocational (PRE) to the post-translocational (POST) state as the newly formed A-site-bound peptidyl-tRNA and P-site-bound deacylated tRNA move to the P and E sites, respectively. Catalyzes the coordinated movement of the two tRNA molecules, the mRNA and conformational changes in the ribosome. This is Elongation factor 2 from Cryptosporidium parvum.